The chain runs to 707 residues: Polyribonucleotide nucleotidyltransferase (707 aa).

Mg(2+) is bound by residues Asp-487 and Asp-493. One can recognise a KH domain in the interval 554-613 (PSMATIKIDPDKIRDVIGKGGATIRKICDDTGASIDLDDDGTVRIYAEDKTAAKAAIDTV). An S1 motif domain is found at 623–691 (GKLYRGTVAR…NRNRVKLSIK (69 aa)).

This sequence belongs to the polyribonucleotide nucleotidyltransferase family. As to quaternary structure, component of the RNA degradosome, which is a multiprotein complex involved in RNA processing and mRNA degradation. It depends on Mg(2+) as a cofactor.

It is found in the cytoplasm. It carries out the reaction RNA(n+1) + phosphate = RNA(n) + a ribonucleoside 5'-diphosphate. Functionally, involved in mRNA degradation. Catalyzes the phosphorolysis of single-stranded polyribonucleotides processively in the 3'- to 5'-direction. The polypeptide is Polyribonucleotide nucleotidyltransferase (Chromohalobacter salexigens (strain ATCC BAA-138 / DSM 3043 / CIP 106854 / NCIMB 13768 / 1H11)).